The primary structure comprises 234 residues: Phosphoribosylaminoimidazole-succinocarboxamide synthase (234 aa).

It belongs to the SAICAR synthetase family.

The enzyme catalyses 5-amino-1-(5-phospho-D-ribosyl)imidazole-4-carboxylate + L-aspartate + ATP = (2S)-2-[5-amino-1-(5-phospho-beta-D-ribosyl)imidazole-4-carboxamido]succinate + ADP + phosphate + 2 H(+). Its pathway is purine metabolism; IMP biosynthesis via de novo pathway; 5-amino-1-(5-phospho-D-ribosyl)imidazole-4-carboxamide from 5-amino-1-(5-phospho-D-ribosyl)imidazole-4-carboxylate: step 1/2. This chain is Phosphoribosylaminoimidazole-succinocarboxamide synthase, found in Streptococcus agalactiae serotype III (strain NEM316).